Here is a 545-residue protein sequence, read N- to C-terminus: Membrane protein insertase YidC (545 aa).

6 helical membrane passes run 10 to 30 (AVYLSLFFIGIFMLLDDFLFS), 319 to 339 (LLYFLQVPMQLIMQIFYNVIP), 341 to 361 (WGLSIMFLTIVVRILIFPLTF), 407 to 427 (IGGCFPILLQLPVFFALYGLV), 467 to 487 (ILPFIMMITQLLSTIVSSNVS), and 502 to 522 (MPIMFFFILYDMPSGLLIYWI).

Belongs to the OXA1/ALB3/YidC family. Type 1 subfamily. In terms of assembly, interacts with the Sec translocase complex via SecD. Specifically interacts with transmembrane segments of nascent integral membrane proteins during membrane integration.

It is found in the cell inner membrane. Required for the insertion and/or proper folding and/or complex formation of integral membrane proteins into the membrane. Involved in integration of membrane proteins that insert both dependently and independently of the Sec translocase complex, as well as at least some lipoproteins. Aids folding of multispanning membrane proteins. This Borrelia recurrentis (strain A1) protein is Membrane protein insertase YidC.